The primary structure comprises 221 residues: DNA replication complex GINS protein SLD5 (221 aa).

It belongs to the GINS4/SLD5 family. In terms of assembly, component of the GINS complex which is a heterotetramer of gins1/psf1, gins2/psf2, gins3/psf3 and gins4/sld5. Component of the CMG helicase complex, composed of the mcm2-7 complex, the GINS complex and cdc45.

It is found in the nucleus. Its subcellular location is the chromosome. The protein localises to the cytoplasm. Required for initiation of chromosomal DNA replication. Core component of CDC45-MCM-GINS (CMG) helicase, the molecular machine that unwinds template DNA during replication, and around which the replisome is built. This Xenopus laevis (African clawed frog) protein is DNA replication complex GINS protein SLD5.